The sequence spans 418 residues: Pyrophosphate--fructose 6-phosphate 1-phosphotransferase (418 aa).

Glycine 13 contributes to the diphosphate binding site. Residue asparagine 111 coordinates Mg(2+). Residues 139–141, 187–189, glutamate 244, and 295–298 each bind substrate; these read TID, MGR, and YLQR. Aspartate 141 serves as the catalytic Proton acceptor.

This sequence belongs to the phosphofructokinase type A (PFKA) family. PPi-dependent PFK group II subfamily. Clade 'B2' sub-subfamily. As to quaternary structure, homodimer. The cofactor is Mg(2+).

Its subcellular location is the cytoplasm. The catalysed reaction is beta-D-fructose 6-phosphate + diphosphate = beta-D-fructose 1,6-bisphosphate + phosphate + H(+). It functions in the pathway carbohydrate degradation; glycolysis; D-glyceraldehyde 3-phosphate and glycerone phosphate from D-glucose: step 3/4. With respect to regulation, non-allosteric. Functionally, catalyzes the phosphorylation of D-fructose 6-phosphate, the first committing step of glycolysis. Uses inorganic phosphate (PPi) as phosphoryl donor instead of ATP like common ATP-dependent phosphofructokinases (ATP-PFKs), which renders the reaction reversible, and can thus function both in glycolysis and gluconeogenesis. Consistently, PPi-PFK can replace the enzymes of both the forward (ATP-PFK) and reverse (fructose-bisphosphatase (FBPase)) reactions. The chain is Pyrophosphate--fructose 6-phosphate 1-phosphotransferase from Xanthomonas campestris pv. campestris (strain B100).